The primary structure comprises 99 residues: MESLFIFAFGMMLSSASALSCIPCVPEECEDPGPCEYGKVLDPCQCCLICRKGPGEICGGPWNLQGVCAEGFACITLSGNPVMNLNGGGQEVGRCRKKY.

The signal sequence occupies residues 1-18 (MESLFIFAFGMMLSSASA). The IGFBP N-terminal domain occupies 19–98 (LSCIPCVPEE…GQEVGRCRKK (80 aa)). O-linked (GalNAc...) serine glycosylation occurs at Ser20. 6 cysteine pairs are disulfide-bonded: Cys21–Cys44, Cys24–Cys46, Cys29–Cys47, Cys35–Cys50, Cys58–Cys74, and Cys68–Cys95.

Expressed in hemocytes.

It localises to the secreted. Its function is as follows. Has a role in the innate immune system. The polypeptide is Single insulin-like growth factor-binding domain protein-2 (Cupiennius salei (American wandering spider)).